Here is a 1390-residue protein sequence, read N- to C-terminus: Nuclear pore complex protein Nup155 (1390 aa).

Ser-525 is a glycosylation site (O-linked (GlcNAc) serine). Residues 598-632 form a disordered region; the sequence is GSPMYSSSPVPTGSPYPNPSSLGTPSHGAQPPTMS. Lys-739 is covalently cross-linked (Glycyl lysine isopeptide (Lys-Gly) (interchain with G-Cter in SUMO2)). The tract at residues 984–1011 is disordered; it reads QSKAAPQSPSVPKKPGPPVLSSDPNMLS. Ser-1056 is modified (phosphoserine).

This sequence belongs to the non-repetitive/WGA-negative nucleoporin family. In terms of assembly, interacts with GLE1. Able to form a heterotrimer with GLE1 and NUP42 in vitro. Forms a complex with NUP35, NUP93, NUP205 and lamin B. In terms of processing, phosphorylated. Phosphorylation and dephosphorylation may be important for the function of NUP155 and may play a role in the reversible disassembly of the nuclear pore complex during mitosis. Disulfide-linked to NUP62. The inner channel of the NPC has a different redox environment from the cytoplasm and allows the formation of interchain disulfide bonds between some nucleoporins, the significant increase of these linkages upon oxidative stress reduces the permeability of the NPC.

The protein resides in the nucleus. The protein localises to the nuclear pore complex. It localises to the nucleus membrane. In terms of biological role, essential component of nuclear pore complex. Could be essessential for embryogenesis. Nucleoporins may be involved both in binding and translocating proteins during nucleocytoplasmic transport. The polypeptide is Nuclear pore complex protein Nup155 (Nup155) (Rattus norvegicus (Rat)).